A 290-amino-acid polypeptide reads, in one-letter code: S-methyl-5'-thioadenosine phosphorylase (290 aa).

Phosphate contacts are provided by residues S11, 53–54, and 86–87; these read RH and SA. M184 serves as a coordination point for substrate. T185 is a binding site for phosphate. 208 to 210 lines the substrate pocket; it reads DYD.

The protein belongs to the PNP/MTAP phosphorylase family. MTAP subfamily. As to quaternary structure, homohexamer. Dimer of a homotrimer.

The catalysed reaction is S-methyl-5'-thioadenosine + phosphate = 5-(methylsulfanyl)-alpha-D-ribose 1-phosphate + adenine. The protein operates within amino-acid biosynthesis; L-methionine biosynthesis via salvage pathway; S-methyl-5-thio-alpha-D-ribose 1-phosphate from S-methyl-5'-thioadenosine (phosphorylase route): step 1/1. Functionally, catalyzes the reversible phosphorylation of S-methyl-5'-thioadenosine (MTA) to adenine and 5-methylthioribose-1-phosphate. Involved in the breakdown of MTA, a major by-product of polyamine biosynthesis. Responsible for the first step in the methionine salvage pathway after MTA has been generated from S-adenosylmethionine. Has broad substrate specificity with 6-aminopurine nucleosides as preferred substrates. This Cereibacter sphaeroides (strain ATCC 17023 / DSM 158 / JCM 6121 / CCUG 31486 / LMG 2827 / NBRC 12203 / NCIMB 8253 / ATH 2.4.1.) (Rhodobacter sphaeroides) protein is S-methyl-5'-thioadenosine phosphorylase.